The chain runs to 383 residues: Serine protease 23 (383 aa).

The first 19 residues, M1–G19, serve as a signal peptide directing secretion. N93 carries an N-linked (GlcNAc...) asparagine glycan. The residue at position 109 (S109) is a Phosphoserine; by FAM20C. A disulfide bond links C160 and C176. The Charge relay system role is filled by H175. An N-linked (GlcNAc...) asparagine glycan is attached at N207. Catalysis depends on charge relay system residues D240 and S316.

The protein belongs to the peptidase S1 family.

The protein resides in the secreted. This Homo sapiens (Human) protein is Serine protease 23 (PRSS23).